Here is a 324-residue protein sequence, read N- to C-terminus: Archaeosine synthase subunit beta (324 aa).

The region spanning Gly12 to Asn254 is the Radical SAM core domain. Residues Cys27, Cys36, and Cys39 each coordinate [4Fe-4S] cluster.

Belongs to the radical SAM superfamily. RaSEA family. In terms of assembly, forms a robust complex with the archaeosine synthase alpha subunit ArcS, likely an alpha(2)beta(2) heterotetrameric structure. [4Fe-4S] cluster serves as cofactor.

The catalysed reaction is 7-N-[(5S)-5-amino-5-carboxypentyl]formamidino-7-deazaguanosine(15) in tRNA + S-adenosyl-L-methionine = archaeosine(15) in tRNA + L-1-piperideine-6-carboxylate + 5'-deoxyadenosine + L-methionine + 2 H(+). The protein operates within tRNA modification; archaeosine-tRNA biosynthesis. Radical SAM enzyme involved in the synthesis of archaeosine, a modified nucleoside present in the dihydrouridine loop (D-loop) of archaeal tRNAs. Catalyzes the cleavage of the C(epsilon)-N bond of the lysine moiety of q0kN15-tRNA, leading to the formation of archaeosine at position 15 in tRNAs. In Thermococcus kodakarensis (strain ATCC BAA-918 / JCM 12380 / KOD1) (Pyrococcus kodakaraensis (strain KOD1)), this protein is Archaeosine synthase subunit beta.